The chain runs to 122 residues: Large ribosomal subunit protein uL14 (122 aa).

Belongs to the universal ribosomal protein uL14 family. As to quaternary structure, part of the 50S ribosomal subunit. Forms a cluster with proteins L3 and L19. In the 70S ribosome, L14 and L19 interact and together make contacts with the 16S rRNA in bridges B5 and B8.

In terms of biological role, binds to 23S rRNA. Forms part of two intersubunit bridges in the 70S ribosome. The polypeptide is Large ribosomal subunit protein uL14 (Clavibacter michiganensis subsp. michiganensis (strain NCPPB 382)).